The chain runs to 601 residues: Elongation factor 4 (601 aa).

The tr-type G domain maps to 7–189 (DTIRNFSIVA…AIVAKLPPPK (183 aa)). Residues 19–24 (DHGKST) and 136–139 (NKID) each bind GTP.

The protein belongs to the TRAFAC class translation factor GTPase superfamily. Classic translation factor GTPase family. LepA subfamily.

Its subcellular location is the cell inner membrane. The catalysed reaction is GTP + H2O = GDP + phosphate + H(+). Its function is as follows. Required for accurate and efficient protein synthesis under certain stress conditions. May act as a fidelity factor of the translation reaction, by catalyzing a one-codon backward translocation of tRNAs on improperly translocated ribosomes. Back-translocation proceeds from a post-translocation (POST) complex to a pre-translocation (PRE) complex, thus giving elongation factor G a second chance to translocate the tRNAs correctly. Binds to ribosomes in a GTP-dependent manner. The protein is Elongation factor 4 of Methylobacterium sp. (strain 4-46).